A 211-amino-acid polypeptide reads, in one-letter code: Protein-L-isoaspartate O-methyltransferase (211 aa).

Ser-62 is an active-site residue.

Belongs to the methyltransferase superfamily. L-isoaspartyl/D-aspartyl protein methyltransferase family.

Its subcellular location is the cytoplasm. The enzyme catalyses [protein]-L-isoaspartate + S-adenosyl-L-methionine = [protein]-L-isoaspartate alpha-methyl ester + S-adenosyl-L-homocysteine. Functionally, catalyzes the methyl esterification of L-isoaspartyl residues in peptides and proteins that result from spontaneous decomposition of normal L-aspartyl and L-asparaginyl residues. It plays a role in the repair and/or degradation of damaged proteins. The polypeptide is Protein-L-isoaspartate O-methyltransferase (Shewanella pealeana (strain ATCC 700345 / ANG-SQ1)).